We begin with the raw amino-acid sequence, 190 residues long: Ferric nitrobindin-like protein (190 aa).

A GXWXGXG motif is present at residues 20–26 (GNWAGAG).

It belongs to the nitrobindin family.

The protein is Ferric nitrobindin-like protein of Streptomyces griseus subsp. griseus (strain JCM 4626 / CBS 651.72 / NBRC 13350 / KCC S-0626 / ISP 5235).